The primary structure comprises 288 residues: 33 kDa chaperonin (288 aa).

2 disulfide bridges follow: Cys-236–Cys-238 and Cys-269–Cys-272.

Belongs to the HSP33 family. Under oxidizing conditions two disulfide bonds are formed involving the reactive cysteines. Under reducing conditions zinc is bound to the reactive cysteines and the protein is inactive.

The protein resides in the cytoplasm. Its function is as follows. Redox regulated molecular chaperone. Protects both thermally unfolding and oxidatively damaged proteins from irreversible aggregation. Plays an important role in the bacterial defense system toward oxidative stress. In Lactococcus lactis subsp. cremoris (strain SK11), this protein is 33 kDa chaperonin.